The primary structure comprises 60 residues: Cytochrome c oxidase assembly protein COX14 homolog (60 aa).

A helical membrane pass occupies residues 10–32 (VGYRLFSGSMMLLTVYGGYLCVV).

It localises to the mitochondrion membrane. Its function is as follows. Plays a role in the assembly or stability of the cytochrome c oxidase complex (COX). The chain is Cytochrome c oxidase assembly protein COX14 homolog from Danio rerio (Zebrafish).